The sequence spans 266 residues: tRNA (guanine-N(7)-)-methyltransferase (266 aa).

A disordered region spans residues 1 to 32; it reads MSDHGRMHIPESGLATPAAAHSDDPPHPHFNR. Glu96, Glu121, Asp148, and Asp171 together coordinate S-adenosyl-L-methionine. Asp171 is an active-site residue. 2 residues coordinate substrate: Lys175 and Asp207.

Belongs to the class I-like SAM-binding methyltransferase superfamily. TrmB family.

The catalysed reaction is guanosine(46) in tRNA + S-adenosyl-L-methionine = N(7)-methylguanosine(46) in tRNA + S-adenosyl-L-homocysteine. It functions in the pathway tRNA modification; N(7)-methylguanine-tRNA biosynthesis. Its function is as follows. Catalyzes the formation of N(7)-methylguanine at position 46 (m7G46) in tRNA. In Mycolicibacterium vanbaalenii (strain DSM 7251 / JCM 13017 / BCRC 16820 / KCTC 9966 / NRRL B-24157 / PYR-1) (Mycobacterium vanbaalenii), this protein is tRNA (guanine-N(7)-)-methyltransferase.